The following is a 426-amino-acid chain: Protein TolB homolog (426 aa).

The first 19 residues, 1-19 (MFLRSFLCLLCLLPSILYC), serve as a signal peptide directing secretion.

Belongs to the TolB family.

It localises to the periplasm. The polypeptide is Protein TolB homolog (Chlamydia muridarum (strain MoPn / Nigg)).